Reading from the N-terminus, the 308-residue chain is Transcription factor zip-2 (308 aa).

Polar residues predominate over residues 217 to 229 (QSSSSSTVETTIT). The disordered stretch occupies residues 217-277 (QSSSSSTVET…RESKEERERL (61 aa)). Residues 242-305 (SSDYRHKRDK…EDYKRLVMMF (64 aa)) form the bZIP domain. The segment at 246-276 (RHKRDKNNLASQKSRQKRQAKIRESKEERER) is basic motif. Positions 266–277 (KIRESKEERERL) are enriched in basic and acidic residues. Residues 277-291 (LEKRKVQLQAMVLTL) form a leucine-zipper region.

It belongs to the bZIP family. C/EBP subfamily. As to expression, expressed in the pharynx and throughout the intestine.

The protein localises to the nucleus. Functionally, transcription factor that binds to the promoter and the enhancer regions of target genes. May act together with the bZIP transcription factor, cebp-2. Involved in responding to mitochondrial damage. Plays a role in the delay of age-associated mitochondrial fragmentation and muscle decline. Has a protective role in response to infection by the Gram-negative bacterium P.aeruginosa. Required to prevent P.aeruginosa ToxA-mediated lethality. Required for the activation of several infection response genes including irg-1 and irg-2 following P.aeruginosa infection; target gene activation may involve effects of the bacterial toxin, ToxA, and perhaps other toxins. The chain is Transcription factor zip-2 from Caenorhabditis elegans.